The chain runs to 498 residues: ATP synthase subunit beta, chloroplastic (498 aa).

172–179 (GGAGVGKT) contributes to the ATP binding site.

The protein belongs to the ATPase alpha/beta chains family. F-type ATPases have 2 components, CF(1) - the catalytic core - and CF(0) - the membrane proton channel. CF(1) has five subunits: alpha(3), beta(3), gamma(1), delta(1), epsilon(1). CF(0) has four main subunits: a(1), b(1), b'(1) and c(9-12).

The protein localises to the plastid. It is found in the chloroplast thylakoid membrane. It catalyses the reaction ATP + H2O + 4 H(+)(in) = ADP + phosphate + 5 H(+)(out). Produces ATP from ADP in the presence of a proton gradient across the membrane. The catalytic sites are hosted primarily by the beta subunits. The polypeptide is ATP synthase subunit beta, chloroplastic (Populus alba (White poplar)).